The following is an 88-amino-acid chain: Apolipoprotein C-I (88 aa).

The first 26 residues, 1 to 26 (MRLFLSLPVLVVVLAMVWEGPAPTQA), serve as a signal peptide directing secretion.

The protein belongs to the apolipoprotein C1 family.

It localises to the secreted. Inhibitor of lipoprotein binding to the low density lipoprotein (LDL) receptor, LDL receptor-related protein, and very low density lipoprotein (VLDL) receptor. Associates with high density lipoproteins (HDL) and the triacylglycerol-rich lipoproteins in the plasma and makes up about 10% of the protein of the VLDL and 2% of that of HDL. Appears to interfere directly with fatty acid uptake and is also the major plasma inhibitor of cholesteryl ester transfer protein (CETP). Binds free fatty acids and reduces their intracellular esterification. Modulates the interaction of APOE with beta-migrating VLDL and inhibits binding of beta-VLDL to the LDL receptor-related protein. In Neomonachus schauinslandi (Hawaiian monk seal), this protein is Apolipoprotein C-I (APOC1).